Consider the following 489-residue polypeptide: Sphingolipid C9-methyltransferase (489 aa).

Transmembrane regions (helical) follow at residues 29-49 (GAKN…PLFV) and 59-79 (TFIF…WTVL). Residues 202 to 203 (YT), 239 to 247 (LLDLGCGWG), 265 to 270 (TLGKNQ), and 295 to 296 (YR) each bind S-adenosyl-L-methionine.

It belongs to the CFA/CMAS family.

Its subcellular location is the membrane. The enzyme catalyses a (4E,8E)-4-sphinga-4,8-dienine ceramide + S-adenosyl-L-methionine = a 9-methyl-(4E,8E)-sphinga-4,8-dienine ceramide + S-adenosyl-L-homocysteine + H(+). It participates in lipid metabolism; sphingolipid metabolism. Its function is as follows. Catalyzes methylation of the sphingoid base component of glucosylceramides (GluCers) at the C9-position. Sphingolipid C9-methylation requires 4,8-desaturated ceramides as substrates. Glucosylceramides play important roles in growth, differentiation and pathogenicity. The methyl group at the C9-position distinguishes fungal glucosylceramides from those of plants and animals, and may thus play a role in host-pathogen interactions enabling the host to recognize the fungal attack and initiate specific defense responses. This is Sphingolipid C9-methyltransferase from Komagataella phaffii (strain GS115 / ATCC 20864) (Yeast).